Reading from the N-terminus, the 60-residue chain is Short neurotoxin 1 (60 aa).

4 cysteine pairs are disulfide-bonded: Cys3/Cys22, Cys17/Cys39, Cys41/Cys52, and Cys53/Cys58.

The protein belongs to the three-finger toxin family. Short-chain subfamily. Type I alpha-neurotoxin sub-subfamily. In terms of tissue distribution, expressed by the venom gland.

The protein localises to the secreted. Its function is as follows. Binds to muscle nicotinic acetylcholine receptor (nAChR) and inhibit acetylcholine from binding to the receptor, thereby impairing neuromuscular transmission. This is Short neurotoxin 1 from Dendroaspis viridis (Western green mamba).